A 3567-amino-acid polypeptide reads, in one-letter code: METCDSPPISRQENGQSTSKLCGTTQLDNEVPEKVAGMEPDRENSSTDDNLKTDERKSEALLGFSVENAAATQVTSAKEIPCNECATSFPSLQKYMEHHCPNARLPVLKDDNESEISELEDSDVENLTGEIVYQPDGSAYIIEDSKESGQNAQTGANSKLFSTAMFLDSLASAGEKSDQSASAPMSFYPQIINTFHIASSLGKPFTADQAFPNTSALAGVGPVLHSFRVYDLRHKREKDYLTSDGSAKNSCVSKDVPNNVDLSKFDGCVSDGKRKPVLMCFLCKLSFGYIRSFVTHAVHDHRMTLNDEEQKLLSNKCVSAIIQGIGKDKEPLISFLEPKKSTSVYPHFSTTNLIGPDPTFRGLWSAFHVENGDSLPAGFAFLKGSASTSSSAEQPLGITQMPKAEVNLGGLSSLVVNTPITSVSLSHSSSESSKMSESKDQENNCERPKESNVLHPNGECPVKSEPTEPGDEDEEDAYSNELDDEEVLGELTDSIGNKDFPLLNQSISPLSSSVLKFIEKGTSSSSATVSDDTEKKKQTAAVRASGSVASNYGISGKDFADASASKDSATAAHPSEIARGDEDSSATPHQHGFTPSTPGTPGPGGDGSPGSGIECPKCDTVLGSSRSLGGHMTMMHSRNSCKTLKCPKCNWHYKYQQTLEAHMKEKHPEPGGSCVYCKTGQPHPRLARGESYTCGYKPFRCEVCNYSTTTKGNLSIHMQSDKHLNNVQNLQNGNGEQVFGHSAPAPNTSLSGCGTPSPSKPKQKPTWRCEVCDYETNVARNLRIHMTSEKHMHNMMLLQQNMKQIQHNLHLGLAPAEAELYQYYLAQNIGLTGMKLENPADPQLMINPFQLDPATAAALAPGLGELSPYISDPALKLFQCAVCNKFTSDSLEALSVHVSSERSLPEEEWRAVIGDIYQCKLCNYNTQLKANFQLHCKTDKHMQKYQLVAHIKEGGKSNEWRLKCIAIGNPVHLKCNACDYYTNSVDKLRLHTTNHRHEAALKLYKHLQKQEGAVNPESCYYYCAVCDYTTKVKLNLVQHVRSVKHQQTEGLRKLQLHQQGLAPEEDNLSEIFFVKDCPPNELETASLGARTCDDDLTEQHEEAEGAIKPTAVAEDDEKDTSERDNSEGKNSNKDSVSVAGGTQPLLLAKEEDVATKRSKPTEDNKFCHEQFYQCPYCNYNSRDQSRIQMHVLSQHSVQPVICCPLCQDVLSNKMHLQLHLTHLHSVSPDCVEKLLMTVPVPDVMMPNSMLLPAAASEKSERDTPAAVTAEGSGKYSGESPMDDKSMAGLEDSKANVEVKNEEQKPTKEPLEVSEWNKNSSKDVKIPDTLQDQLNEQQKRQPLSVSDRHVYKYRCNHCSLAFKTMQKLQIHSQYHAIRAATMCNLCQRSFRTFQALKKHLEAGHPELSEAELQQLYASLPVNGELWAESETMSQDDHGLEQEMEREYEVDHEGKASPVGSDSSSIPDDMGSEPKRTLPFRKGPNFTMEKFLDPSRPYKCTVCKESFTQKNILLVHYNSVSHLHKLKKVLQEASSPVPQETNSNTDNKPYKCSICNVAYSQSSTLEIHMRSVLHQTKARAAKLEPSGHVAGGHSIAANVNSPGQGMLDSMSLAAVNSKDTHLDAKELNKKQTPDLISAQPAHHPPQSPAQIQMQLQHELQQQAAFFQPQFLNPAFLPHFPMTPEALLQFQQPQFLFPFYIPGTEFSLGPDLGLPGSATFGMPGMTGMAGSLLEDLKQQIQTQHHVGQTQLQILQQQAQQYQATQPQLQPQKQQQQPPPPQQQQQQQASKLLKQEQSNIVSADCQIMKDVPSYKEAEDISEKPEKPKQEFISEGEGLKEGKDTKKQKSLEPSIPPPRIASGARGNAAKALLENFGFELVIQYNENRQKVQKKGKSGEGENTDKLECGTCGKLFSNVLILKSHQEHVHGQFFPYAALEKFARQYREAYDKLYPISPSSPETPPPPPPPPPLPPAPPQPSSMGPVKIPNTVSTPLQAPPPTPPPPPPPPPPPPPPPPPPPPSAPPQVQLPVSLDLPLFPSIMMQPVQHPALPPQLALQLPQMDALSADLTQLCQQQLGLDPNFLRHSQFKRPRTRITDDQLKILRAYFDINNSPSEEQIQEMAEKSGLSQKVIKHWFRNTLFKERQRNKDSPYNFSNPPITVLEDIRIDPQPTSLEHYKSDASFSKRSSRTRFTDYQLRVLQDFFDTNAYPKDDEIEQLSTVLNLPTRVIVVWFQNARQKARKSYENQAETKDNEKRELTNERYIRTSNMQYQCKKCNVVFPRIFDLITHQKKQCYKDEDDDAQDESQTEDSMDATDQVVYKHCTVSGQTDAAKNAAAPAASSGSGTSTPLIPSPKPEPEKTSPKPEYPAEKPKQSDPSPPSQGTKPALPLASTSSDPPQASTAQPQPQPQPPKQPQLIGRPPSASQTPVPSSPLQISMTSLQNSLPPQLLQYQCDQCTVAFPTLELWQEHQHMHFLAAQNQFLHSPFLERPMDMPYMIFDPNNPLMTGQLLGSSLTQMPPQASSSHTTAPTTVAASLKRKLDDKEDNNCSEKEGGNSGEDQHRDKRLRTTITPEQLEILYEKYLLDSNPTRKMLDHIAREVGLKKRVVQVWFQNTRARERKGQFRAVGPAQSHKRCPFCRALFKAKSALESHIRSRHWNEGKQAGYSLPPSPLISTEDGGESPQKYIYFDYPSLPLTKIDLSSENELASTVSTPVSKTAELSPKNLLSPSSFKAECSEDVENLNAPPAEAGYDQNKTDFDETSSINTAISDATTGDEGNTEMESTTGSSGDVKPALSPKEPKTLDTLPKPATTPTTEVCDDKFLFSLTSPSIHFNDKDGDHDQSFYITDDPDDNADRSETSSIADPSSPNPFGSSNPFKSKSNDRPGHKRFRTQMSNLQLKVLKACFSDYRTPTMQECEMLGNEIGLPKRVVQVWFQNARAKEKKFKINIGKPFMINQGGTEGTKPECTLCGVKYSARLSIRDHIFSKQHISKVRETVGSQLDREKDYLAPTTVRQLMAQQELDRIKKASDVLGLTVQQPGMMDSSSLHGISLPTAYPGLPGLPPVLLPGMNGPSSLPGFPQNSNISAGMLGFPTSATSSPALSLSSAPTKPLLQTPPPPPPPPPPPPSSSLSGQQTEQQNKESEKKQTKPNKVKKIKEEELEATKPEKHPKKEEKISSALSVLGKVVGETHVDPIQLQALQNAIAGDPASFIGGQFLPYFIPGFASYFTPQLPGTVQGGYFPPVCGMESLFPYGPTMPQTLAGLSPGALLQQYQQYQQNLQESLQKQQKQQQEQQQKPVQAKTSKVESDQPQNSNDASETKEDKSTATESTKEEPQLESKSADFSDTYVVPFVKYEFICRKCQMMFTDEDAAVNHQKSFCYFGQPLIDPQETVLRVPVSKYQCLACDVAISGNEALSQHLQSSLHKEKTIKQAMRNAKEHVRLLPHSVCSPNPNTTSTSQSAASSNNTYPHLSCFSMKSWPNILFQASARRAASPPSSPPSLSLPSTVTSSLCSTSGVQTSLPTESCSDESDSELSQKLEDLDNSLEVKAKPASGLDGNFNSIRMDMFSV.

Met-1 is modified (N-acetylmethionine). Disordered regions lie at residues 1–54, 425–480, 522–545, and 565–611; these read METC…LKTD, LSHS…AYSN, TSSS…VRAS, and SKDS…SPGS. Polar residues predominate over residues 9–28; that stretch reads ISRQENGQSTSKLCGTTQLD. Basic and acidic residues-rich tracts occupy residues 39 to 54 and 434 to 452; these read EPDR…LKTD and KMSE…KESN. Positions 468–480 are enriched in acidic residues; that stretch reads EPGDEDEEDAYSN. 3 consecutive C2H2-type zinc fingers follow at residues 613-636, 644-667, and 699-723; these read IECP…TMMH, LKCP…KEKH, and FRCE…SDKH. The C2H2-type 4; degenerate zinc finger occupies 767–789; sequence WRCEVCDYETNVARNLRIHMTSE. C2H2-type zinc fingers lie at residues 917–941, 973–995, and 1021–1045; these read YQCK…TDKH, LKCN…TTNH, and YYCA…SVKH. The interval 1098–1160 is disordered; it reads EQHEEAEGAI…EDVATKRSKP (63 aa). Composition is skewed to basic and acidic residues over residues 1120–1132 and 1148–1160; these read TSER…KNSN and AKEE…RSKP. Lys-1149 is covalently cross-linked (Glycyl lysine isopeptide (Lys-Gly) (interchain with G-Cter in SUMO2)). 2 consecutive C2H2-type zinc fingers follow at residues 1172-1195 and 1201-1224; these read YQCP…LSQH and ICCP…THLH. Positions 1254–1324 are disordered; sequence AASEKSERDT…WNKNSSKDVK (71 aa). A compositionally biased stretch (basic and acidic residues) spans 1281 to 1310; it reads MDDKSMAGLEDSKANVEVKNEEQKPTKEPL. Glycyl lysine isopeptide (Lys-Gly) (interchain with G-Cter in SUMO2) cross-links involve residues Lys-1299 and Lys-1324. C2H2-type zinc fingers lie at residues 1352–1374 and 1380–1403; these read YRCN…SQYH and TMCN…EAGH. Positions 1429–1480 are disordered; the sequence is ETMSQDDHGLEQEMEREYEVDHEGKASPVGSDSSSIPDDMGSEPKRTLPFRK. A compositionally biased stretch (basic and acidic residues) spans 1433–1453; it reads QDDHGLEQEMEREYEVDHEGK. A C2H2-type 12 zinc finger spans residues 1496–1522; that stretch reads YKCTVCKESFTQKNILLVHYNSVSHLH. A Glycyl lysine isopeptide (Lys-Gly) (interchain with G-Cter in SUMO2) cross-link involves residue Lys-1546. Residues 1548 to 1572 form a C2H2-type 13 zinc finger; sequence YKCSICNVAYSQSSTLEIHMRSVLH. Composition is skewed to low complexity over residues 1761–1772 and 1779–1791; these read TQPQLQPQKQQQ and QQQQ…LLKQ. Disordered regions lie at residues 1761-1791 and 1809-1858; these read TQPQ…LLKQ and SYKE…IASG. Lys-1790 participates in a covalent cross-link: Glycyl lysine isopeptide (Lys-Gly) (interchain with G-Cter in SUMO2). Residues 1809–1845 are compositionally biased toward basic and acidic residues; sequence SYKEAEDISEKPEKPKQEFISEGEGLKEGKDTKKQKS. The C2H2-type 14 zinc finger occupies 1901-1924; the sequence is LECGTCGKLFSNVLILKSHQEHVH. The interval 1948 to 2024 is disordered; the sequence is YPISPSSPET…PPSAPPQVQL (77 aa). Pro residues-rich tracts occupy residues 1955–1974 and 1991–2019; these read PETP…PPQP and QAPP…PSAP. 2 consecutive DNA-binding regions (homeobox) follow at residues 2084–2143 and 2181–2240; these read FKRP…RQRN and KRSS…RKSY. The segment at 2267 to 2291 adopts a C2H2-type 15; degenerate zinc-finger fold; that stretch reads YQCKKCNVVFPRIFDLITHQKKQCY. Disordered stretches follow at residues 2289 to 2311 and 2328 to 2431; these read QCYK…MDAT and AKNA…SPLQ. A compositionally biased stretch (acidic residues) spans 2293–2309; that stretch reads DEDDDAQDESQTEDSMD. Low complexity predominate over residues 2331–2345; sequence AAAPAASSGSGTSTP. Basic and acidic residues predominate over residues 2352-2370; sequence PEPEKTSPKPEYPAEKPKQ. Residues 2419–2431 are compositionally biased toward polar residues; that stretch reads SASQTPVPSSPLQ. The C2H2-type 16 zinc-finger motif lies at 2448-2470; it reads YQCDQCTVAFPTLELWQEHQHMH. The segment covering 2507 to 2530 has biased composition (polar residues); the sequence is LGSSLTQMPPQASSSHTTAPTTVA. A disordered region spans residues 2507 to 2564; it reads LGSSLTQMPPQASSSHTTAPTTVAASLKRKLDDKEDNNCSEKEGGNSGEDQHRDKRLR. Residues 2535-2559 are compositionally biased toward basic and acidic residues; sequence RKLDDKEDNNCSEKEGGNSGEDQHR. The homeobox 3 DNA-binding region spans 2560 to 2619; it reads DKRLRTTITPEQLEILYEKYLLDSNPTRKMLDHIAREVGLKKRVVQVWFQNTRARERKGQ. A C2H2-type 17 zinc finger spans residues 2630 to 2653; that stretch reads KRCPFCRALFKAKSALESHIRSRH. Ser-2663 carries the phosphoserine modification. Positions 2764 to 2785 are enriched in polar residues; the sequence is AISDATTGDEGNTEMESTTGSS. Disordered regions lie at residues 2764–2811 and 2829–2885; these read AISD…TTPT and HFND…PGHK. The segment covering 2830-2839 has biased composition (basic and acidic residues); sequence FNDKDGDHDQ. Residues 2862-2874 show a composition bias toward low complexity; the sequence is PSSPNPFGSSNPF. A DNA-binding region (homeobox 4) is located at residues 2884 to 2943; that stretch reads HKRFRTQMSNLQLKVLKACFSDYRTPTMQECEMLGNEIGLPKRVVQVWFQNARAKEKKFK. A C2H2-type 18 zinc finger spans residues 2962–2986; sequence PECTLCGVKYSARLSIRDHIFSKQH. Residues 3092 to 3110 are compositionally biased toward low complexity; that stretch reads SATSSPALSLSSAPTKPLL. 2 disordered regions span residues 3092–3172 and 3281–3337; these read SATS…KEEK and LQKQ…LESK. Positions 3111 to 3125 are enriched in pro residues; it reads QTPPPPPPPPPPPPS. Residues 3126 to 3135 are compositionally biased toward polar residues; it reads SSLSGQQTEQ. Over residues 3153 to 3172 the composition is skewed to basic and acidic residues; the sequence is IKEEELEATKPEKHPKKEEK. Lys-3154 participates in a covalent cross-link: Glycyl lysine isopeptide (Lys-Gly) (interchain with G-Cter in SUMO2). The stretch at 3265–3294 forms a coiled coil; the sequence is ALLQQYQQYQQNLQESLQKQQKQQQEQQQK. The segment covering 3281–3293 has biased composition (low complexity); the sequence is LQKQQKQQQEQQQ. Residues 3294 to 3314 show a composition bias toward polar residues; it reads KPVQAKTSKVESDQPQNSNDA. Basic and acidic residues predominate over residues 3315–3337; it reads SETKEDKSTATESTKEEPQLESK. The C2H2-type 19; degenerate zinc-finger motif lies at 3354–3378; the sequence is FICRKCQMMFTDEDAAVNHQKSFCY. A C2H2-type 20 zinc finger spans residues 3398 to 3422; that stretch reads YQCLACDVAISGNEALSQHLQSSLH. 2 disordered regions span residues 3443 to 3462 and 3511 to 3534; these read HSVC…AASS and STSG…ELSQ. Residues 3447–3462 are compositionally biased toward low complexity; the sequence is SPNPNTTSTSQSAASS.

It belongs to the krueppel C2H2-type zinc-finger protein family. In terms of tissue distribution, expressed in brain, skeletal muscle and liver. Very low expression in stomach.

Its subcellular location is the nucleus. In terms of biological role, may play a role in neural and muscle differentiation. May be involved in transcriptional regulation. The sequence is that of Zinc finger homeobox protein 4 (ZFHX4) from Homo sapiens (Human).